We begin with the raw amino-acid sequence, 147 residues long: UPF0735 ACT domain-containing protein BPUM_2431 (147 aa).

In terms of domain architecture, ACT spans 70–145 (TLFFHLEDRS…FVEKVEILGS (76 aa)).

Belongs to the UPF0735 family.

This Bacillus pumilus (strain SAFR-032) protein is UPF0735 ACT domain-containing protein BPUM_2431.